Consider the following 355-residue polypeptide: UPF0421 protein BALH_2468 (355 aa).

Transmembrane regions (helical) follow at residues 19–39 (IAVFLTVLVCEFFNIPTIFAV), 74–94 (FTFFLGHQALSYALAAMFTIV), 109–129 (TLTAVAMIPITADHYFTAFLI), and 131–151 (LATTSTGIIVSTVVNFFILPP).

It belongs to the UPF0421 family.

The protein resides in the cell membrane. This chain is UPF0421 protein BALH_2468, found in Bacillus thuringiensis (strain Al Hakam).